The sequence spans 360 residues: Probable neutral protease 2 homolog MCYG_04257 (360 aa).

Positions 1–17 are cleaved as a signal peptide; the sequence is MQLIAFLAALGVPVAFA. The propeptide occupies 18–182; it reads ATIPSVPLNH…KVKAGSIDKR (165 aa). A disulfide bond links cysteine 190 and cysteine 261. Asparagine 262 carries an N-linked (GlcNAc...) asparagine glycan. 2 cysteine pairs are disulfide-bonded: cysteine 268/cysteine 286 and cysteine 300/cysteine 360. A Zn(2+)-binding site is contributed by histidine 311. Glutamate 312 is an active-site residue. Zn(2+) is bound by residues histidine 315 and aspartate 326.

This sequence belongs to the peptidase M35 family. Requires Zn(2+) as cofactor.

Its subcellular location is the secreted. It catalyses the reaction Preferential cleavage of bonds with hydrophobic residues in P1'. Also 3-Asn-|-Gln-4 and 8-Gly-|-Ser-9 bonds in insulin B chain.. Functionally, probable secreted metalloprotease that shows high activities on basic nuclear substrates such as histone and protamine. May be involved in virulence. The protein is Probable neutral protease 2 homolog MCYG_04257 of Arthroderma otae (strain ATCC MYA-4605 / CBS 113480) (Microsporum canis).